The chain runs to 399 residues: F-box/kelch-repeat protein At5g48980 (399 aa).

A compositionally biased stretch (polar residues) spans 1 to 11; it reads MADSQRLSTAS. The interval 1-29 is disordered; it reads MADSQRLSTASGVKDGQPPWKKKKLSNDT. Positions 29–75 constitute an F-box domain; sequence TTSNPSLPYDVILIILARVSRSYYTNLSLVSKSFRSILTSPELYKTR. Residues 199-248 form a Kelch repeat; it reads IVYLPGSFESPDSLNCVEVYNTMTQTWKPVPPEKRMFKLENLEKKIYYKS.

This chain is F-box/kelch-repeat protein At5g48980, found in Arabidopsis thaliana (Mouse-ear cress).